The chain runs to 1191 residues: MSPIALNLLQSTPYQVGGSLAANHPSYSQREADRELLAQLRAGKFCYVFNCRQMGKSSLRVRAMHQLQQDGVVCVSIDITSLGTEADPQKWYNGIITQLYLGLPLAGKVALKPWLREREQLSPIQKLREFVETIILQTIGDRQIVIFIDEIDKVLSLPFSLDDFFSYIRFCYNQRADDHEYNRLSFALFGVATPSDLIDNKTQTPFNIGQAIALTGFTLTEALPLSAGLPVDEVSAREILGEILAWTGGQPFLTQKVCELVAEALQKGDLDCQSQTIATTIAQLIEEKIIRHWESNDEPVHFRTIGDRLLKDQARSGQLLGLYQEILHKGAIPADDSVEQTVLRLTGLVVKVKGQLRPYNPIYQAIFNAQWVSKELNKLRPYGTNLQAWINSNYQDSSRLLRGEALREALAWASSKNLSGVDYRYLNASQNQEQEASLAANQILTQANVKAKRMISFGIVVLMMSLGGSAIALSQAYFATLKQQRSQQGTELQRLGTSAQRQFTFDQIPGLVTALEAGNQLHHLVKADETLSQYPATSPLVSLQQILSQIAEKNVLTGHRDGVTSVAISSHKNLIASASRDGTVHLWTPQGEFLREFTGHTGSIYRVDFSPNGKIFATAGQDQTVKIWDLDGNLLQTLKGHQDSVYSVSFSPDGEILASTSRDRTVRLWHWRSGKTLAVLGGHTKSVDDAQFSPDGQTLVSVCRDGQIRLWDLDGNLIRQFGLPEVAFFGVNWHPNGNLLAVAADDGTVRLWTPQGEIKATLSGHDEFVTRVVFTPDGKQLFSSSSNGSVIHWSTSGKMLKKYQGYPEAIFGLALASNGALLAIGAENNLVKVWDMSPKSDLVNLNLPAVLGAVAENAKTNTIALAMENEPLILFNTKNRSRQFLSDASQNLDRLKFSADGQWLLGQRGRQWQLWQLQTKSQLLKTWRTDISRVYDVDLRTTPTSPQWAIAMATGSGEVQLWQGTKNNQTSGNQSQGVPIELNDPIVLALGNSIQRKEPIRSVSLHPTLPQLAAGDEQGNLTLWNFDGTLIRSIVAHGDRLNQLQYSPNGKYLLSAGREGTAKIWSVEGQLLHTLKSDPLPIDQIAISPDSQWIATAASDGMVRLWDQQGNLRGEFTSTSGSLLGLDFNRQGQWLLAVAQNGDLQSWPVTPEKERLRQLVEQGCDWLRDYLATEKQPAQTYSLEFCQPTGN.

WD repeat units lie at residues 558-588 (GHRD…HLWT), 599-629 (GHTG…KIWD), 640-670 (GHQD…RLWH), 682-712 (GHTK…RLWD), 723-753 (LPEV…RLWT), 764-794 (GHDE…IHWS), 805-835 (GYPE…KVWD), 995-1025 (QRKE…TLWN), 1036-1066 (AHGD…KIWS), 1077-1107 (SDPL…RLWD), and 1118-1148 (STSG…QSWP).

This is an uncharacterized protein from Synechocystis sp. (strain ATCC 27184 / PCC 6803 / Kazusa).